The primary structure comprises 309 residues: Peptidyl-prolyl cis-trans isomerase 9 (309 aa).

The PPIase cyclophilin-type domain occupies 8–173; sequence FLDISVDENL…AKVLISNCGE (166 aa). Basic and acidic residues-rich tracts occupy residues 217-229, 239-265, 280-289, and 296-309; these read NEKK…DKRR, RSHE…RDEN, ERSATPEHWR, and WVHD…EDLV. The disordered stretch occupies residues 217–309; it reads NEKKHEMRND…SHKHPEEDLV (93 aa).

Belongs to the cyclophilin-type PPIase family. As to expression, co-expressed with pdi-1 in the syncytial hypodermis.

It catalyses the reaction [protein]-peptidylproline (omega=180) = [protein]-peptidylproline (omega=0). PPIases accelerate the folding of proteins. It catalyzes the cis-trans isomerization of proline imidic peptide bonds in oligopeptides. Thought to function as a catalyst in the folding and modification of cuticle collagens. In Caenorhabditis elegans, this protein is Peptidyl-prolyl cis-trans isomerase 9 (cyn-9).